Consider the following 392-residue polypeptide: Small ribosomal subunit protein bS1 (392 aa).

4 S1 motif domains span residues 16 to 90 (GDKV…LSKR), 108 to 173 (DEII…LSRK), 194 to 262 (GDVI…LSIK), and 279 to 348 (DDVI…LSIK).

Belongs to the bacterial ribosomal protein bS1 family.

Binds mRNA; thus facilitating recognition of the initiation point. It is needed to translate mRNA with a short Shine-Dalgarno (SD) purine-rich sequence. In Staphylococcus haemolyticus (strain JCSC1435), this protein is Small ribosomal subunit protein bS1 (rpsA).